The following is a 2896-amino-acid chain: MSEKSGQSTKAKDGKKYATLSLFNTYKGKSLETQKTTARHGLQSLGKVGISRRMPPPANLPSLKAENKGNDPNVNIVPKDGTGWASKQEQHEEEKTPEVPPAQPKPGVAAPPEVAPAPKSWASNKQGGQGDGIQVNSQFQQEFPSLQAAGDQEKKEKETNDDNYGPGPSLRPPNVACWRDGGKAAGSPSSSDQDEKLPGQDESTAGTSEQNDILKVVEKRIACGPPQAKLNGQQAALASQYRAMMPPYMFQQYPRMTYPPLHGPMRFPPSLSETNKGLRGRGPPPSWASEPERPSILSASELKELDKFDNLDAEADEGWAGAQMEVDYTEQLNFSDDDEQGSNSPKENNSEDQGSKASENNENKKETDEVSNTKSSSQIPAQPSVAKVPYGKGPSFNQERGTSSHLPPPPKLLAQQHPPPDRQAVPGRPGPFPSKQQVADEDEIWKQRRRQQSEISAAVERARKRREEEERRMEEQRKAACAEKLKRLDEKLGILEKQPSPEEIREREREKEREREKELEKEQEQEREKEREKDRERQQEKEKELEKEQEKQREMEKERKQEKEKELERQKEKEKELQKMKEQEKECELEKEREKLEEKIEPREPNLEPMVEKQESENSCNKEEEPVFTRQDSNRSEKEATPVVHETEPESGSQPRPAVLSGYFKQFQKSLPPRFQRQQEQMKQQQWQQQQQQGVLPQTVPSQPSSSTVPPPPHRPLYQPMQPHPQHLASMGFDPRWLMMQSYMDPRMMSGRPAMDIPPIHPGMIPPKPLMRRDQMEGSPNSSESFEHIARSARDHAISLSEPRMLWGSDPYPHAEPQQATTPKATEEPEDVRSEAALDQEQITAAYSVEHNQLEAHPKADFIRESSEAQVQKFLSRSVEDVRPHHTDANNQSACFEAPDQKTLSAPQEERISAVESQPSRKRSVSHGSNHTQKPDEQRSEPSAGIPKVTSRCIDSKEPIERPEEKPKKEGFIRSSEGPKPEKVYKSKSETRWGPRPSSNRREEVNDRPVRRSGPIKKPVLRDMKEEREQRKEKEGEKAEKVTEKVVVKPEKTEKKDLPPPPPPPQPPAPIQPQSVPPPIQPEAEKFPSTETATLAQKPSQDTEKPLEPVSTVQVEPAVKTVNQQTMAAPVVKEEKQPEKVISKDLVIERPRPDSRPAVKKESTLPPRTYWKEARERDWFPDQGYRGRGRGEYYSRGRSYRGSYGGRGRGGRGHTRDYPQYRDNKPRAEHIPSGPLRQREESETRSESSDFEVVPKRRRQRGSETDTDSEIHESASDKDSLSKGKLPKREERPENKKPVKPHSSFKPDNHVRIDNRLLEKPYVRDDDKAKPGFLPKGEPTRRGRGGTFRRGGRDPGGRPSRPSTLRRPAYRDNQWNPRQSEVPKPEDGEPPRRHEQFIPIAADKRPPKFERKFDPARERPRRQRPTRPPRQDKPPRFRRLREREAASKSNEVVAVPTNGTVNNVAQEPVNTLGDISGNKTPDLSNQNSSDQANEEWETASESSDFNERRERDEKKNADLNAQTVVKVGENVLPPKREIAKRSFSSQRPVDRQNRRGNNGPPKSGRNFSGPRNERRSGPPSKSGKRGPFDDQPAGTTGVDLINGSSAHHQEGVPNGTGQKNSKDSTGKKREDPKPGPKKPKEKVDALSQFDLNNYASVVIIDDHPEVTVIEDPQSNLNDDGFTEVVSKKQQKRLQDEERRKKEEQVIQVWNKKNANEKGRSQTSKLPPRFAKKQATGIQQAQSSASVPPLASAPLPPSTSASVPASTSAPLPATLTPVPASTSAPVPASTLAPVLASTSAPVPASPLAPVSASASVSASVPASTSAAAITSSSAPASAPAPTPILASVSTPASVTILASASIPILASALASTSAPTPAPAASSPAAPVITAPTIPASAPTASVPLAPASASAPAPAPTPVSAPNPAPPAPAQTQAQTHKPVQNPLQTTSQSSKQPPPSIRLPSAQTPNGTDYVASGKSIQTPQSHGTLTAELWDNKVAPPAVLNDISKKLGPISPPQPPSVSAWNKPLTSFGSAPSSEGAKNGQESGLEIGTDTIQFGAPASNGNENEVVPVLSEKSADKIPEPKEQRQKQPRAGPIKAQKLPDLSPVENKEHKPGPIGKERSLKNRKVKDAQQVEPEGQEKPSPATVRSTDPVTTKETKAVSEMSTEIGTMISVSSAEYGTNAKESVTDYTTPSSSLPNTVATNNTKMEDTLVNNVPLPNTLPLPKRETIQQSSSLTSVPPTTFSLTFKMESARKAWENSPNVREKGSPVTSTAPPIATGVSSSASGPSTANYNSFSSASMPQIPVASVTPTASLSGAGTYTTSSLSTKSTTTSDPPNICKVKPQQLQTSSLPSASHFSQLSCMPSLIAQQQQNPQVYVSQSAAAQIPAFYMDTSHLFNTQHARLAPPSLAQQQGFQPGLSQPTSVQQIPIPIYAPLQGQHQAQLSLGAGPAVSQAQELFSSSLQPYRSQPAFMQSSLSQPSVVLSGTAIHNFPTVQHQELAKAQSGLAFQQTSNTQPIPILYEHQLGQASGLGGSQLIDTHLLQARANLTQASNLYSGQVQQPGQTNFYNTAQSPSALQQVTVPLPASQLSLPNFGSTGQPLIALPQTLQPPLQHTTPQAQAQSLSRPAQVSQPFRGLIPAGTQHSMIATTGKMSEMELKAFGSGIDIKPGTPPIAGRSTTPTSSPFRATSTSPNSQSSKMNSIVYQKQFQSAPATVRMTQPFPTQFAPQILSQPNLVPPLVRAPHTNTFPAPVQRPPMALASQMPPPLTTGLMSHARLPHVARGPCGSLSGVRGNQAQAALKAEQDMKAKQRAEVLQSTQRFFSEQQQSKQIGGGKAQKVDSDSSKPPETLTDPPGVCQEKVEEKPPPAPSIATKPVRTGPIKPQAIKTEETKS.

Lys-27 carries the N6-acetyllysine modification. A disordered region spans residues 28 to 212; it reads GKSLETQKTT…STAGTSEQND (185 aa). The segment covering 88 to 97 has biased composition (basic and acidic residues); it reads QEQHEEEKTP. Low complexity predominate over residues 105–119; it reads KPGVAAPPEVAPAPK. Positions 134 to 144 are enriched in polar residues; sequence QVNSQFQQEFP. Residues 151–160 show a composition bias toward basic and acidic residues; the sequence is DQEKKEKETN. Residues Ser-187 and Ser-191 each carry the phosphoserine modification. Residues 201-211 show a composition bias toward polar residues; sequence DESTAGTSEQN. Arg-242 carries the post-translational modification Asymmetric dimethylarginine; alternate. Omega-N-methylarginine; alternate is present on Arg-242. Residues Arg-255 and Arg-266 each carry the asymmetric dimethylarginine modification. Disordered regions lie at residues 264–729 and 750–788; these read PMRF…QHLA and SGRP…SFEH. Residues Arg-279 and Arg-281 each carry the omega-N-methylarginine modification. Residues 301–310 are compositionally biased toward basic and acidic residues; the sequence is ELKELDKFDN. At Ser-335 the chain carries Phosphoserine. The segment covering 341–358 has biased composition (polar residues); it reads GSNSPKENNSEDQGSKAS. The span at 359-368 shows a compositional bias: basic and acidic residues; it reads ENNENKKETD. Residues 370-381 show a composition bias toward polar residues; it reads VSNTKSSSQIPA. Lys-392 is subject to N6-acetyllysine. 2 positions are modified to phosphoserine: Ser-395 and Ser-500. A compositionally biased stretch (polar residues) spans 395–405; the sequence is SFNQERGTSSH. The segment covering 465 to 648 has biased composition (basic and acidic residues); sequence RREEEERRME…EATPVVHETE (184 aa). The span at 676–708 shows a compositional bias: low complexity; sequence QRQQEQMKQQQWQQQQQQGVLPQTVPSQPSSST. Residues 759 to 769 are compositionally biased toward pro residues; that stretch reads PIHPGMIPPKP. Ser-779, Ser-785, and Ser-801 each carry phosphoserine. Positions 804-1118 are disordered; the sequence is RMLWGSDPYP…PVSTVQVEPA (315 aa). 3 stretches are compositionally biased toward basic and acidic residues: residues 825 to 836, 852 to 867, and 878 to 888; these read ATEEPEDVRSEA, NQLE…RESS, and SVEDVRPHHTD. A phosphoserine mark is found at Ser-867, Ser-878, Ser-920, and Ser-929. 3 stretches are compositionally biased toward basic and acidic residues: residues 954–993, 1000–1010, and 1020–1058; these read IDSK…ETRW, NRREEVNDRPV, and VLRD…KKDL. Positions 1020 to 1046 form a coiled coil; it reads VLRDMKEEREQRKEKEGEKAEKVTEKV. Over residues 1059–1081 the composition is skewed to pro residues; it reads PPPPPPPQPPAPIQPQSVPPPIQ. Residues 1089–1100 show a composition bias toward polar residues; the sequence is STETATLAQKPS. Residue Lys-1133 forms a Glycyl lysine isopeptide (Lys-Gly) (interchain with G-Cter in SUMO2) linkage. 4 stretches are compositionally biased toward basic and acidic residues: residues 1143-1163, 1170-1180, 1214-1230, and 1237-1248; these read SKDL…KKES, YWKEARERDWF, HTRD…RAEH, and RQREESETRSES. 8 disordered regions span residues 1143 to 1647, 1670 to 1785, 1905 to 1991, 2005 to 2164, 2218 to 2238, 2257 to 2290, 2317 to 2341, and 2668 to 2701; these read SKDL…DALS, EDPQ…SAPV, APAS…TAEL, ISKK…VSEM, LPNT…SLTS, WENS…GPST, GAGT…NICK, and DIKP…QSSK. Ser-1242, Ser-1246, Ser-1248, Ser-1249, and Ser-1263 each carry phosphoserine. Composition is skewed to basic and acidic residues over residues 1261–1297, 1305–1330, 1381–1418, and 1429–1446; these read RGSE…ENKK, FKPD…DKAK, EVPK…PARE, and PRQD…REAA. 2 positions are modified to phosphothreonine: Thr-1265 and Thr-1267. Polar residues-rich tracts occupy residues 1457–1469 and 1477–1491; these read TNGT…QEPV and GNKT…SSDQ. Basic and acidic residues predominate over residues 1505-1517; sequence FNERRERDEKKNA. The residue at position 1544 (Ser-1544) is a Phosphoserine. Basic and acidic residues-rich tracts occupy residues 1620-1634 and 1692-1704; these read NSKD…DPKP and RLQD…KEEQ. Positions 1682-1717 form a coiled coil; the sequence is TEVVSKKQQKRLQDEERRKKEEQVIQVWNKKNANEK. A compositionally biased stretch (low complexity) spans 1742–1785; it reads SSASVPPLASAPLPPSTSASVPASTSAPLPATLTPVPASTSAPV. A compositionally biased stretch (pro residues) spans 1913–1929; the sequence is APAPTPVSAPNPAPPAP. Residues 1943–1952 show a composition bias toward low complexity; sequence PLQTTSQSSK. Phosphothreonine is present on Thr-1965. Over residues 1976 to 1986 the composition is skewed to polar residues; the sequence is KSIQTPQSHGT. Phosphoserine is present on residues Ser-1983 and Ser-2013. A compositionally biased stretch (polar residues) spans 2019 to 2035; that stretch reads SVSAWNKPLTSFGSAPS. A compositionally biased stretch (basic and acidic residues) spans 2075–2088; that stretch reads KSADKIPEPKEQRQ. Position 2105 is a phosphoserine (Ser-2105). A compositionally biased stretch (basic and acidic residues) spans 2108–2132; that stretch reads ENKEHKPGPIGKERSLKNRKVKDAQ. Phosphoserine is present on Ser-2143. Basic and acidic residues predominate over residues 2257-2267; that stretch reads WENSPNVREKG. Phosphoserine is present on Ser-2260. Residues 2269–2290 are compositionally biased toward polar residues; sequence PVTSTAPPIATGVSSSASGPST. The span at 2320 to 2334 shows a compositional bias: low complexity; the sequence is TYTTSSLSTKSTTTS. 2 positions are modified to phosphothreonine: Thr-2673 and Thr-2682. A compositionally biased stretch (polar residues) spans 2679 to 2701; it reads RSTTPTSSPFRATSTSPNSQSSK. Phosphoserine occurs at positions 2686 and 2694. Arg-2814 is subject to Omega-N-methylarginine. Asymmetric dimethylarginine; alternate is present on Arg-2823. At Arg-2823 the chain carries Omega-N-methylarginine; alternate. Positions 2824–2833 are enriched in polar residues; it reads FFSEQQQSKQ. The disordered stretch occupies residues 2824–2896; the sequence is FFSEQQQSKQ…QAIKTEETKS (73 aa).

Overexpressed in bladder cancer.

The protein resides in the cytoplasm. The protein localises to the stress granule. In terms of biological role, required for efficient formation of stress granules. This is Protein PRRC2C from Homo sapiens (Human).